The chain runs to 483 residues: WAS/WASL-interacting protein family member 3 (483 aa).

Pro residues predominate over residues 1–29 (MPVPPPPPPPLPPPPPPLGAPPPPPPSAP). A disordered region spans residues 1 to 414 (MPVPPPPPPP…GGQLRNGSLH (414 aa)). 3 short sequence motifs (profilin-binding motif) span residues 3 to 8 (VPPPPP), 11 to 16 (LPPPPP), and 20 to 25 (APPPPP). The region spanning 45-62 (GRSALLADIQQGTRLRKV) is the WH2 domain. Arg-46 bears the Asymmetric dimethylarginine mark. The short motif at 58–61 (RLRK) is the RLRK element. Polar residues-rich tracts occupy residues 63-78 (TQINDRSAPQIESSKG) and 87-96 (ANTRGASTPP). Ser-149 bears the Phosphoserine mark. Over residues 166 to 192 (PPRPNVPAPPPPTPPPPPPPLPPPLPS) the composition is skewed to pro residues. Ser-202 carries the post-translational modification Phosphoserine. Composition is skewed to pro residues over residues 215-239 (VAPPVPCAPPPPPPPPPPTPPPLPP) and 256-271 (HLPPIPPPLPLLPPCG). Positions 277–288 (AEPASPAQDAQE) are enriched in low complexity. Pro residues predominate over residues 289-298 (PPAPPPPLPP). Low complexity-rich tracts occupy residues 299 to 308 (YASCSPRASL) and 331 to 345 (PSFQAPPQKAGAQAL). Residue Ser-383 is modified to Phosphoserine. Residues 393-404 (QQATAWTPTQQP) are compositionally biased toward low complexity. The WASP-binding motif motif lies at 424-448 (TFHSVEDFPPPDEYKPCQKIYPSKI). The segment at 461–483 (EAVGQSSDDIKGRNSQLSLKTLR) is disordered. Polar residues predominate over residues 473-483 (RNSQLSLKTLR).

Belongs to the verprolin family. Interacts with WASL, and monomeric and filamentous actin.

The protein resides in the cytoplasm. In terms of biological role, may be a regulator of cytoskeletal organization. May have a role in spermatogenesis. The polypeptide is WAS/WASL-interacting protein family member 3 (WIPF3) (Homo sapiens (Human)).